Reading from the N-terminus, the 203-residue chain is Probable cytochrome c oxidase subunit 3 (203 aa).

Helical transmembrane passes span 30 to 50, 71 to 91, 96 to 116, 143 to 163, and 179 to 199; these read IVWL…YFSA, VPVT…VFAA, IFGL…FVLG, ATGF…FLLV, and IVVS…FTVI.

This sequence belongs to the cytochrome c oxidase subunit 3 family.

The protein localises to the cell membrane. The enzyme catalyses 4 Fe(II)-[cytochrome c] + O2 + 8 H(+)(in) = 4 Fe(III)-[cytochrome c] + 2 H2O + 4 H(+)(out). The chain is Probable cytochrome c oxidase subunit 3 (ctaE) from Mycobacterium bovis (strain ATCC BAA-935 / AF2122/97).